Here is a 555-residue protein sequence, read N- to C-terminus: Potassium-transporting ATPase potassium-binding subunit (555 aa).

10 helical membrane-spanning segments follow: residues 2–22 (IWVA…PTGI), 60–80 (QYAL…YFIF), 130–150 (IGIT…VMAF), 173–193 (VFLP…VPQT), 246–266 (MSNI…PFTY), 278–298 (ILFV…TTSE), 374–394 (AGFV…GLMV), 412–432 (LIAV…ALAL), 483–503 (LVMF…AASL), and 525–545 (GIFI…MLVL).

It belongs to the KdpA family. In terms of assembly, the system is composed of three essential subunits: KdpA, KdpB and KdpC.

Its subcellular location is the cell membrane. In terms of biological role, part of the high-affinity ATP-driven potassium transport (or Kdp) system, which catalyzes the hydrolysis of ATP coupled with the electrogenic transport of potassium into the cytoplasm. This subunit binds the extracellular potassium ions and delivers the ions to the membrane domain of KdpB through an intramembrane tunnel. This is Potassium-transporting ATPase potassium-binding subunit from Bacillus cereus (strain AH187).